A 339-amino-acid chain; its full sequence is Anthranilate phosphoribosyltransferase (339 aa).

5-phospho-alpha-D-ribose 1-diphosphate contacts are provided by residues Gly-79, 82–83 (GD), Thr-87, 89–92 (NVST), 107–115 (KHGNRAVSS), and Ser-119. Residue Gly-79 coordinates anthranilate. Position 91 (Ser-91) interacts with Mg(2+). Asn-110 contributes to the anthranilate binding site. Arg-165 is a binding site for anthranilate. Mg(2+)-binding residues include Asp-224 and Glu-225.

Belongs to the anthranilate phosphoribosyltransferase family. In terms of assembly, homodimer. Mg(2+) serves as cofactor.

It catalyses the reaction N-(5-phospho-beta-D-ribosyl)anthranilate + diphosphate = 5-phospho-alpha-D-ribose 1-diphosphate + anthranilate. It participates in amino-acid biosynthesis; L-tryptophan biosynthesis; L-tryptophan from chorismate: step 2/5. Catalyzes the transfer of the phosphoribosyl group of 5-phosphorylribose-1-pyrophosphate (PRPP) to anthranilate to yield N-(5'-phosphoribosyl)-anthranilate (PRA). The protein is Anthranilate phosphoribosyltransferase of Geobacillus stearothermophilus (Bacillus stearothermophilus).